Consider the following 131-residue polypeptide: Profilin-2 (131 aa).

This sequence belongs to the profilin family. As to quaternary structure, occurs in many kinds of cells as a complex with monomeric actin in a 1:1 ratio.

It localises to the cytoplasm. The protein resides in the cytoskeleton. Its function is as follows. Binds to actin and affects the structure of the cytoskeleton. At high concentrations, profilin prevents the polymerization of actin, whereas it enhances it at low concentrations. By binding to PIP2, it inhibits the formation of IP3 and DG. The sequence is that of Profilin-2 from Lilium longiflorum (Trumpet lily).